Here is a 249-residue protein sequence, read N- to C-terminus: 1-(5-phosphoribosyl)-5-[(5-phosphoribosylamino)methylideneamino] imidazole-4-carboxamide isomerase (249 aa).

Residue aspartate 8 is the Proton acceptor of the active site. Catalysis depends on aspartate 129, which acts as the Proton donor.

Belongs to the HisA/HisF family.

The protein resides in the cytoplasm. The enzyme catalyses 1-(5-phospho-beta-D-ribosyl)-5-[(5-phospho-beta-D-ribosylamino)methylideneamino]imidazole-4-carboxamide = 5-[(5-phospho-1-deoxy-D-ribulos-1-ylimino)methylamino]-1-(5-phospho-beta-D-ribosyl)imidazole-4-carboxamide. It functions in the pathway amino-acid biosynthesis; L-histidine biosynthesis; L-histidine from 5-phospho-alpha-D-ribose 1-diphosphate: step 4/9. This is 1-(5-phosphoribosyl)-5-[(5-phosphoribosylamino)methylideneamino] imidazole-4-carboxamide isomerase from Rhizobium rhizogenes (strain K84 / ATCC BAA-868) (Agrobacterium radiobacter).